A 726-amino-acid chain; its full sequence is Bromodomain-containing protein 3 (726 aa).

The segment at 1–35 (MSTATTVAPAGIPATPGPVNPPPPEVSNPSKPGRK) is disordered. An N-acetylserine modification is found at Ser-2. Residues 15-26 (TPGPVNPPPPEV) are compositionally biased toward pro residues. The Bromo 1 domain maps to 34–140 (RKTNQLQYMQ…KIFLQKVAQM (107 aa)). Residues 78-80 (KNP) form an acetylated histone H3 binding region. 2 disordered regions span residues 149-169 (PPAPKGKGRKPAAGAQSAGTQ) and 237-305 (VKKK…AGKK). A compositionally biased stretch (low complexity) spans 248-261 (TTTPTTSAITASRS). A phosphoserine mark is found at Ser-263 and Ser-281. A Bromo 2 domain is found at 306–415 (GKLSEHLRYC…DVFEMRFAKM (110 aa)). Lys-414 participates in a covalent cross-link: Glycyl lysine isopeptide (Lys-Gly) (interchain with G-Cter in SUMO2). Disordered regions lie at residues 421–462 (EAPA…RATR), 477–575 (LAAL…MSYD), and 637–726 (LQKK…SDSE). The stretch at 453 to 524 (SDSEEERATR…AEEEKKAKVA (72 aa)) forms a coiled coil. The segment covering 487-503 (KPKKKKEKKEKEKKKKD) has biased composition (basic residues). Basic and acidic residues predominate over residues 504 to 521 (KEKEKEKHKVKAEEEKKA). Residues 523 to 540 (VAPPAKQAQQKKAPAKKA) show a composition bias toward low complexity. Residues 562-644 (DSEEEEEGLP…SCLQKKQRKP (83 aa)) form the NET domain. Ser-563 carries the post-translational modification Phosphoserine. Residues 645–684 (FSASGKKQAAKSKEELAQEKKKELEKRLQDVSGQLSSSKK) adopt a coiled-coil conformation. Basic and acidic residues predominate over residues 655-673 (KSKEELAQEKKKELEKRLQ). Positions 692 to 726 (GSAPSGGPSRLSSSSSSESGSSSSSGSSSDSSDSE) are enriched in low complexity.

Belongs to the BET family. Interacts (via bromo domain 1) with GATA1 acetylated at 'Lys-312' and 'Lys-315'. Interacts (via bromo domain 1) with GATA2 acetylated on lysine residues. Interacts (via NET domain) with CHD4 (via KIKL motif). Interacts (via NET domain) with SMARCA4 (via KIKL motif). Interacts (via NET domain) with NSD3 (via KIKL motif). As to quaternary structure, (Microbial infection) Interacts with the Integrase protein of Moloney murine leukemia virus (MLV). Ubiquitous.

It localises to the nucleus. The protein localises to the chromosome. Its activity is regulated as follows. Inhibited by JQ1, a thieno-triazolo-1,4-diazepine derivative, which specifically inhibits members of the BET family (BRD2, BRD3 and BRD4). The first bromo domain is inhibited by GSK778 (iBET-BD1), which specifically inhibits the first bromo domain of members of the BET family (BRD2, BRD3 and BRD4). The second bromo domain is inhibited by ABBV-744, which specifically inhibits the second bromo domain of members of the BET family (BRD2, BRD3 and BRD4). The second bromo domain is inhibited by GSK046 (iBET-BD2), which specifically inhibits the second bromo domain of members of the BET family (BRD2, BRD3 and BRD4). Functionally, chromatin reader that recognizes and binds acetylated histones, thereby controlling gene expression and remodeling chromatin structures. Recruits transcription factors and coactivators to target gene sites, and activates RNA polymerase II machinery for transcriptional elongation. In vitro, binds acetylated lysine residues on the N-terminus of histone H2A, H2B, H3 and H4. Involved in endoderm differentiation via its association with long non-coding RNA (lncRNA) DIGIT: BRD3 undergoes liquid-liquid phase separation upon binding to lncRNA DIGIT, promoting binding to histone H3 acetylated at 'Lys-18' (H3K18ac) to induce endoderm gene expression. Also binds non-histones acetylated proteins, such as GATA1 and GATA2: regulates transcription by promoting the binding of the transcription factor GATA1 to its targets. This Homo sapiens (Human) protein is Bromodomain-containing protein 3.